Consider the following 193-residue polypeptide: Holliday junction branch migration complex subunit RuvA (193 aa).

The segment at 1–64 is domain I; it reads MIGRIAGTLI…EDAHLLYGFG (64 aa). The tract at residues 65-143 is domain II; that stretch reads SAAERNTFRE…AELGHAPGAA (79 aa). The interval 144 to 151 is flexible linker; the sequence is PVHDSAVD. The segment at 151–193 is domain III; that stretch reads DILNALLALGYSEKEAATAIKQVPAGTGVSDGIKLALKALSKA.

Belongs to the RuvA family. In terms of assembly, homotetramer. Forms an RuvA(8)-RuvB(12)-Holliday junction (HJ) complex. HJ DNA is sandwiched between 2 RuvA tetramers; dsDNA enters through RuvA and exits via RuvB. An RuvB hexamer assembles on each DNA strand where it exits the tetramer. Each RuvB hexamer is contacted by two RuvA subunits (via domain III) on 2 adjacent RuvB subunits; this complex drives branch migration. In the full resolvosome a probable DNA-RuvA(4)-RuvB(12)-RuvC(2) complex forms which resolves the HJ.

It is found in the cytoplasm. Functionally, the RuvA-RuvB-RuvC complex processes Holliday junction (HJ) DNA during genetic recombination and DNA repair, while the RuvA-RuvB complex plays an important role in the rescue of blocked DNA replication forks via replication fork reversal (RFR). RuvA specifically binds to HJ cruciform DNA, conferring on it an open structure. The RuvB hexamer acts as an ATP-dependent pump, pulling dsDNA into and through the RuvAB complex. HJ branch migration allows RuvC to scan DNA until it finds its consensus sequence, where it cleaves and resolves the cruciform DNA. This chain is Holliday junction branch migration complex subunit RuvA, found in Cupriavidus pinatubonensis (strain JMP 134 / LMG 1197) (Cupriavidus necator (strain JMP 134)).